The primary structure comprises 592 residues: Probable tubulin polyglutamylase TTLL2 (592 aa).

Disordered stretches follow at residues 1–23 (MRGR…TTTP) and 51–77 (GVSI…MAED). Positions 7 to 23 (CSSTQSQALGSLRTTTP) are enriched in polar residues. The TTL domain maps to 84–427 (LKPLVFRVDE…NGLRNEGREA (344 aa)). ATP is bound by residues Lys212, 218–219 (RG), 240–243 (QKYI), and 253–255 (KCD). Residue Arg218 coordinates a protein. Arg279 is a binding site for L-glutamate. Position 298–299 (298–299 (TN)) interacts with ATP. Residues Ser301 and Lys321 each contribute to the L-glutamate site. Positions 373, 386, and 388 each coordinate Mg(2+). Lys404 contributes to the L-glutamate binding site.

This sequence belongs to the tubulin--tyrosine ligase family. The cofactor is Mg(2+). As to expression, testis.

Functionally, probable tubulin polyglutamylase that generates side chains of glutamate on the gamma-carboxyl group of specific glutamate residues within the C-terminal tail of target proteins. Similar to TTLL1, may acquire enzymatic activity only in complex with other proteins as it is most likely lacking domains important for autonomous activity. Probably involved in the side-chain initiation step of the polyglutamylation reaction rather than the elongation step. The protein is Probable tubulin polyglutamylase TTLL2 of Homo sapiens (Human).